A 467-amino-acid polypeptide reads, in one-letter code: Flagellum-specific ATP synthase (467 aa).

195 to 202 (SSSGIGKS) lines the ATP pocket.

Belongs to the ATPase alpha/beta chains family.

It localises to the cytoplasm. The catalysed reaction is ATP + H2O + 4 H(+)(in) = ADP + phosphate + 5 H(+)(out). Its function is as follows. Probable catalytic subunit of a protein translocase for flagellum-specific export, or a proton translocase involved in local circuits at the flagellum. May be involved in a specialized protein export pathway that proceeds without signal peptide cleavage. This Buchnera aphidicola subsp. Acyrthosiphon pisum (strain APS) (Acyrthosiphon pisum symbiotic bacterium) protein is Flagellum-specific ATP synthase (fliI).